The sequence spans 462 residues: O-methyltransferase CTB2 (462 aa).

D289 provides a ligand contact to S-adenosyl-L-methionine. H340 (proton acceptor) is an active-site residue.

It belongs to the class I-like SAM-binding methyltransferase superfamily. Cation-independent O-methyltransferase family. COMT subfamily.

The protein operates within mycotoxin biosynthesis. Its function is as follows. O-methyltransferase; part of the gene cluster that mediates the biosynthesis of cercosporin, a light-activated, non-host-selective toxin. The perylenequinone chromophore of cercosporin absorbs light energy to attain an electronically-activated triplet state and produces active oxygen species such as the hydroxyl radical, superoxide, hydrogen peroxide or singlet oxygen upon reaction with oxygen molecules. These reactive oxygen species cause damage to various cellular components including lipids, proteins and nucleic acids. The first step of cercosporin biosynthesis is performed by the polyketide synthase CTB1 which catalyzes the formation of nor-toralactone. The starter unit acyltransferase (SAT) domain of CTB1 initiates polyketide extension by the selective utilization of acetyl-CoA, which is elongated to the heptaketide in the beta-ketoacyl synthase (KS) domain by successive condensations with six malonyl units introduced by the malonyl acyltransferase (MAT) domain. The product template (PT) domain catalyzes C4-C9 and C2-C11 aldol cyclizations and dehydrations to a trihydroxynaphthalene, which is thought to be delivered to the thioesterase (TE) domain for product release. The bifunctional enzyme CTB3 then methylates nor-toralactone to toralactone before conducting an unusual oxidative aromatic ring opening. The O-methyltransferase CTB2 further methylates the nascent OH-6 of the CBT3 product, blocking further oxidation at this site before the reductase CTB6 reduces the 2-oxopropyl ketone at position C7, giving naphthalene. The FAD-dependent monooxygenase CTB5 in concert with the multicopper oxidase CTB12 are responsible for homodimerization of naphthalene with CTB7 installing the dioxepine moiety, finally producing cercosporin. The fasciclin domain-containing protein CTB11 might act with CTB5 and CTB12 whereas the roles of CTB9 and CTB10 have still to be elucidated. This chain is O-methyltransferase CTB2, found in Cercospora beticola (Sugarbeet leaf spot fungus).